We begin with the raw amino-acid sequence, 107 residues long: Nucleoid-associated protein RP866 (107 aa).

The protein belongs to the YbaB/EbfC family. As to quaternary structure, homodimer.

Its subcellular location is the cytoplasm. The protein localises to the nucleoid. Its function is as follows. Binds to DNA and alters its conformation. May be involved in regulation of gene expression, nucleoid organization and DNA protection. This Rickettsia prowazekii (strain Madrid E) protein is Nucleoid-associated protein RP866.